We begin with the raw amino-acid sequence, 149 residues long: Arginine regulator (149 aa).

It belongs to the ArgR family.

It localises to the cytoplasm. It participates in amino-acid degradation; L-arginine degradation via ADI pathway. Functionally, regulates the transcription of the arc operon, involved in arginine catabolism. The polypeptide is Arginine regulator (argR1) (Bacillus cereus (strain ATCC 10987 / NRS 248)).